The sequence spans 360 residues: Phospho-N-acetylmuramoyl-pentapeptide-transferase (360 aa).

10 helical membrane-spanning segments follow: residues Val18–Leu38, Pro72–Tyr92, Ser94–Val114, Trp132–Gly152, Ile168–Ser188, Gly199–Thr219, Ala236–Phe256, Val263–Leu283, Phe288–Val308, and Val338–Lys358.

The protein belongs to the glycosyltransferase 4 family. MraY subfamily. It depends on Mg(2+) as a cofactor.

It localises to the cell inner membrane. The enzyme catalyses UDP-N-acetyl-alpha-D-muramoyl-L-alanyl-gamma-D-glutamyl-meso-2,6-diaminopimeloyl-D-alanyl-D-alanine + di-trans,octa-cis-undecaprenyl phosphate = di-trans,octa-cis-undecaprenyl diphospho-N-acetyl-alpha-D-muramoyl-L-alanyl-D-glutamyl-meso-2,6-diaminopimeloyl-D-alanyl-D-alanine + UMP. It functions in the pathway cell wall biogenesis; peptidoglycan biosynthesis. In terms of biological role, catalyzes the initial step of the lipid cycle reactions in the biosynthesis of the cell wall peptidoglycan: transfers peptidoglycan precursor phospho-MurNAc-pentapeptide from UDP-MurNAc-pentapeptide onto the lipid carrier undecaprenyl phosphate, yielding undecaprenyl-pyrophosphoryl-MurNAc-pentapeptide, known as lipid I. The polypeptide is Phospho-N-acetylmuramoyl-pentapeptide-transferase (Serratia proteamaculans (strain 568)).